The sequence spans 371 residues: Peptide chain release factor 2 (371 aa).

Q252 bears the N5-methylglutamine mark.

It belongs to the prokaryotic/mitochondrial release factor family. Methylated by PrmC. Methylation increases the termination efficiency of RF2.

It is found in the cytoplasm. Its function is as follows. Peptide chain release factor 2 directs the termination of translation in response to the peptide chain termination codons UGA and UAA. This chain is Peptide chain release factor 2, found in Staphylococcus haemolyticus (strain JCSC1435).